Consider the following 275-residue polypeptide: Ribosomal RNA small subunit methyltransferase A (275 aa).

S-adenosyl-L-methionine contacts are provided by Asn19, Leu21, Gly46, Glu71, Asp94, and Asn117.

Belongs to the class I-like SAM-binding methyltransferase superfamily. rRNA adenine N(6)-methyltransferase family. RsmA subfamily.

The protein resides in the cytoplasm. It carries out the reaction adenosine(1518)/adenosine(1519) in 16S rRNA + 4 S-adenosyl-L-methionine = N(6)-dimethyladenosine(1518)/N(6)-dimethyladenosine(1519) in 16S rRNA + 4 S-adenosyl-L-homocysteine + 4 H(+). Specifically dimethylates two adjacent adenosines (A1518 and A1519) in the loop of a conserved hairpin near the 3'-end of 16S rRNA in the 30S particle. May play a critical role in biogenesis of 30S subunits. This chain is Ribosomal RNA small subunit methyltransferase A, found in Burkholderia thailandensis (strain ATCC 700388 / DSM 13276 / CCUG 48851 / CIP 106301 / E264).